A 335-amino-acid polypeptide reads, in one-letter code: MSHSSGIPASQELISAFGSANTGDVRLIKVVIKNDELVVDQKLNVQSDFETDLELAHSVLQKDSPCYILYKKDDKSIELTGYNWIFMFFVPDNAKVREKMTYAATRGNLKRELGASHFVDEIYSSNMNDFSKKGYQQHKLHQESEAPLTMEEQQRNDEKEQGLFVGGGGSGMHVHGISFPVDSDASTAVSNFINKKFNYIELSVNVDDEKIIFSSSSNIDIEAISSKISSTEPSFHFFRYSHQHEGENLDSIIYIYSCPDGSNGTKSAPVRKRMLFSSSKANVEQLVTSHNVKIDLKLEINSPSEISEESIINELHPPKVEEKKAFSKPSRPGRK.

ADF-H domains are found at residues 4–140 (SSGI…QHKL) and 176–316 (GISF…NELH). The disordered stretch occupies residues 307–335 (SEESIINELHPPKVEEKKAFSKPSRPGRK). Residues 316–325 (HPPKVEEKKA) are compositionally biased toward basic and acidic residues.

This sequence belongs to the actin-binding proteins ADF family. Twinfilin subfamily. In terms of assembly, interacts with G-actin; ADP-actin form.

Its subcellular location is the cytoplasm. The protein localises to the cytoskeleton. The protein resides in the cell cortex. Functionally, actin-binding protein involved in motile and morphological processes. Inhibits actin polymerization, likely by sequestering G-actin. The protein is Twinfilin (twfA) of Dictyostelium discoideum (Social amoeba).